The primary structure comprises 175 residues: Ribosome maturation factor RimM (175 aa).

The PRC barrel domain maps to 96–175 (DGDYYWKDLI…IIKVDWDPEF (80 aa)).

It belongs to the RimM family. As to quaternary structure, binds ribosomal protein uS19.

It localises to the cytoplasm. In terms of biological role, an accessory protein needed during the final step in the assembly of 30S ribosomal subunit, possibly for assembly of the head region. Essential for efficient processing of 16S rRNA. May be needed both before and after RbfA during the maturation of 16S rRNA. It has affinity for free ribosomal 30S subunits but not for 70S ribosomes. The polypeptide is Ribosome maturation factor RimM (Baumannia cicadellinicola subsp. Homalodisca coagulata).